A 230-amino-acid chain; its full sequence is UPF0758 protein Daud_1467 (230 aa).

The region spanning 108–230 is the MPN domain; the sequence is TVRTPEEAAG…FTSLKLEGLF (123 aa). Residues H179, H181, and D192 each coordinate Zn(2+). Positions 179 to 192 match the JAMM motif motif; it reads HNHPSGDPAPSPQD.

Belongs to the UPF0758 family.

The sequence is that of UPF0758 protein Daud_1467 from Desulforudis audaxviator (strain MP104C).